Reading from the N-terminus, the 502-residue chain is Probable cytosol aminopeptidase (502 aa).

Residues Lys-269 and Asp-274 each coordinate Mn(2+). Residue Lys-281 is part of the active site. Residues Asp-292, Asp-351, and Glu-353 each coordinate Mn(2+). Arg-355 is an active-site residue.

It belongs to the peptidase M17 family. Requires Mn(2+) as cofactor.

The protein resides in the cytoplasm. The catalysed reaction is Release of an N-terminal amino acid, Xaa-|-Yaa-, in which Xaa is preferably Leu, but may be other amino acids including Pro although not Arg or Lys, and Yaa may be Pro. Amino acid amides and methyl esters are also readily hydrolyzed, but rates on arylamides are exceedingly low.. It catalyses the reaction Release of an N-terminal amino acid, preferentially leucine, but not glutamic or aspartic acids.. In terms of biological role, presumably involved in the processing and regular turnover of intracellular proteins. Catalyzes the removal of unsubstituted N-terminal amino acids from various peptides. This is Probable cytosol aminopeptidase from Vibrio parahaemolyticus serotype O3:K6 (strain RIMD 2210633).